Consider the following 415-residue polypeptide: Squalene synthase 12 (415 aa).

2 consecutive transmembrane segments (helical) span residues alanine 281–phenylalanine 301 and leucine 391–leucine 411.

Belongs to the phytoene/squalene synthase family. Requires Mg(2+) as cofactor. Mn(2+) is required as a cofactor.

The protein localises to the endoplasmic reticulum membrane. The enzyme catalyses 2 (2E,6E)-farnesyl diphosphate + NADH + H(+) = squalene + 2 diphosphate + NAD(+). It catalyses the reaction 2 (2E,6E)-farnesyl diphosphate + NADPH + H(+) = squalene + 2 diphosphate + NADP(+). It participates in terpene metabolism; lanosterol biosynthesis; lanosterol from farnesyl diphosphate: step 1/3. Component of the triterpene saponins (e.g. ginsenosides or panaxosides) and phytosterols biosynthetic pathways. Catalyzes the biosynthesis of squalene. This is Squalene synthase 12 from Panax ginseng (Korean ginseng).